The primary structure comprises 430 residues: Ribosomal protein uS12 methylthiotransferase RimO (430 aa).

Positions 2 to 119 (ISVYSISLGC…WPEMIGRALG (118 aa)) constitute an MTTase N-terminal domain. C11, C46, C81, C145, C149, and C152 together coordinate [4Fe-4S] cluster. The region spanning 131–361 (STGPSYAYLK…MEVQAEISEE (231 aa)) is the Radical SAM core domain. One can recognise a TRAM domain in the interval 364 to 430 (EGFTGSDEDV…SRTYDLVALS (67 aa)).

This sequence belongs to the methylthiotransferase family. RimO subfamily. [4Fe-4S] cluster serves as cofactor.

The protein localises to the cytoplasm. The catalysed reaction is L-aspartate(89)-[ribosomal protein uS12]-hydrogen + (sulfur carrier)-SH + AH2 + 2 S-adenosyl-L-methionine = 3-methylsulfanyl-L-aspartate(89)-[ribosomal protein uS12]-hydrogen + (sulfur carrier)-H + 5'-deoxyadenosine + L-methionine + A + S-adenosyl-L-homocysteine + 2 H(+). Functionally, catalyzes the methylthiolation of an aspartic acid residue of ribosomal protein uS12. This Oleidesulfovibrio alaskensis (strain ATCC BAA-1058 / DSM 17464 / G20) (Desulfovibrio alaskensis) protein is Ribosomal protein uS12 methylthiotransferase RimO.